Here is a 527-residue protein sequence, read N- to C-terminus: N-acetylglucosamine-1-phosphodiester alpha-N-acetylglucosaminidase (527 aa).

The first 25 residues, 1–25, serve as a signal peptide directing secretion; the sequence is MASSMGRFLLFFIALRGFLLEASGD. A propeptide spans 26–49 (removed in mature form); the sequence is FGSGASRDDDVLLPYSRARARLAR. Residues 50–463 are Lumenal-facing; that stretch reads DCTRVHAGRL…SLLTRTTWLA (414 aa). Intrachain disulfides connect Cys116/Cys149, Cys133/Cys324, Cys308/Cys315, Cys363/Cys374, and Cys381/Cys390. 3 N-linked (GlcNAc...) asparagine glycosylation sites follow: Asn209, Asn215, and Asn297. The region spanning 359–391 is the EGF-like domain; that stretch reads DKLDCGPANCSQHGLCTETGCRCEAGWTGSNCS. Residues Asn367, Asn389, and Asn421 are each glycosylated (N-linked (GlcNAc...) asparagine). A helical membrane pass occupies residues 464–484; that stretch reads ITLALAFLLLISTAANVSLFL. The Cytoplasmic segment spans residues 485–527; sequence GSRAARRRHLDGAYVYHPLQEVNGEHPAAEKEQLGDSSNPFKD. The interval 498–505 is mediates the interaction with AP4M1; that stretch reads YVYHPLQE. The short motif at 500-503 is the Tyrosine-based internalization motif element; the sequence is YHPL. An NPF internalization motif motif is present at residues 523–527; the sequence is NPFKD.

Homotetramer arranged as two disulfide-linked homodimers. Interacts with AP4M1. Glycosylated. Contains complex N-linked oligosaccharides with appreciable amounts of sialic acid. In terms of processing, the precursor is cleaved and activated in the trans-Golgi network by a furin endopeptidase.

It localises to the golgi apparatus. The protein localises to the golgi stack membrane. Its subcellular location is the trans-Golgi network. The enzyme catalyses N(4)-[6-(N-acetyl-alpha-D-glucosaminyl-1-phospho)-alpha-D-mannosyl-(1-&gt;2)-alpha-D-mannosyl-(glycan)]-L-asparaginyl-[protein] + H2O = N(4)-[6-phospho-alpha-D-mannosyl-(1-&gt;2)-alpha-D-mannosyl-(glycan)]-L-asparaginyl-[protein] + N-acetyl-D-glucosamine + H(+). The protein operates within protein modification; protein glycosylation. Its function is as follows. Catalyzes the second step in the formation of the mannose 6-phosphate targeting signal on lysosomal enzyme oligosaccharides by removing GlcNAc residues from GlcNAc-alpha-P-mannose moieties, which are formed in the first step. Also hydrolyzes UDP-GlcNAc, a sugar donor for Golgi N-acetylglucosaminyltransferases. This Bos taurus (Bovine) protein is N-acetylglucosamine-1-phosphodiester alpha-N-acetylglucosaminidase (NAGPA).